Reading from the N-terminus, the 1181-residue chain is Putative primase (1181 aa).

The interval R1141–F1181 is disordered. Positions L1163–F1181 are enriched in acidic residues.

The protein belongs to the eukaryotic-type primase small subunit family.

Synthesizes small RNA primers for the Okazaki fragments on both template strands at replication forks during viral DNA synthesis. The polypeptide is Putative primase (Magallana gigas (Pacific oyster)).